A 271-amino-acid chain; its full sequence is Structure-specific endonuclease subunit slx1 (271 aa).

Residues 5–87 form the GIY-YIG domain; it reads NFYCCYLLKS…QNLGISRYTK (83 aa). An SLX1-type zinc finger spans residues 180 to 231; it reads CNLCYECIESDELRANCPFTDCNSINHLTCLASSFLTEECQVLPIEGMCTKC.

It belongs to the SLX1 family. As to quaternary structure, forms a heterodimer with slx4. It depends on Mg(2+) as a cofactor. Requires Mn(2+) as cofactor.

The protein resides in the nucleus. The protein localises to the nucleolus. Catalytic subunit of the slx1-slx4 structure-specific endonuclease that resolves DNA secondary structures generated during DNA repair and recombination. Has endonuclease activity towards branched DNA substrates, introducing single-strand cuts in duplex DNA close to junctions with ss-DNA. Has a preference for stem-loop (SL) and splayed arm Y structures. Introduces a single-strand cut in duplex DNA on the 3' side of a double-strand/single-strand junction with respect to the single-strand moving 3' to 5' away from the junction. Plays a critical role in maintaining the integrity of the ribosomal DNA (rDNA) loci, where it has a role in re-starting stalled replication forks. The complex initiates homologous recombination (HR) events, used to maintain rDNA copy number, in the rDNA repeats that are processed by a mechanism that requires rad22, but not rhp51. It is also required for suppression of methyl methanesulfonate (MMS) and UV-C irradiation hypersensitivity of the structural maintenance of chromosome (SMC) protein mutant, smc6-74, by overexpression of brc1. Has Holliday junction resolvase activity in vitro. The polypeptide is Structure-specific endonuclease subunit slx1 (Schizosaccharomyces pombe (strain 972 / ATCC 24843) (Fission yeast)).